A 145-amino-acid chain; its full sequence is Putative antiporter subunit mnhG2 (145 aa).

The next 3 helical transmembrane spans lie at 11–31, 51–71, and 72–92; these read IAAV…IGIV, VLLT…FFSV, and RLLL…HLVA.

It belongs to the CPA3 antiporters (TC 2.A.63) subunit G family. As to quaternary structure, may form a heterooligomeric complex that consists of seven subunits: mnhA2, mnhB2, mnhC2, mnhD2, mnhE2, mnhF2 and mnhG2.

The protein resides in the cell membrane. The protein is Putative antiporter subunit mnhG2 (mnhG2) of Staphylococcus aureus (strain MRSA252).